Consider the following 483-residue polypeptide: Probable 4-aminobutyrate aminotransferase, mitochondrial (483 aa).

148-149 (GT) is a binding site for pyridoxal 5'-phosphate. Residue arginine 204 coordinates substrate. Lysine 341 is subject to N6-(pyridoxal phosphate)lysine. Residue threonine 365 coordinates pyridoxal 5'-phosphate.

It belongs to the class-III pyridoxal-phosphate-dependent aminotransferase family. In terms of assembly, homodimer. It depends on pyridoxal 5'-phosphate as a cofactor.

It is found in the mitochondrion matrix. The enzyme catalyses 4-aminobutanoate + 2-oxoglutarate = succinate semialdehyde + L-glutamate. It carries out the reaction (S)-3-amino-2-methylpropanoate + 2-oxoglutarate = 2-methyl-3-oxopropanoate + L-glutamate. The protein is Probable 4-aminobutyrate aminotransferase, mitochondrial (gta-1) of Caenorhabditis elegans.